Reading from the N-terminus, the 279-residue chain is MKTTKTFKQMKRDGEPIAMLTAYDAPSARLAERAGVDMILVGDSLGMVVLGYDSTVPVSVDDMVLHTKAVKRGAPNTFVVTDMPFLTYHSSFSETAGHVRRLLQEAGADAVKLEGGTDIASTVQRLTAAGVPVVGHIGLTPQSVGVLGGYRVQGKAQEEGEQLLADAQALEQAGAFAIVVECVPKQLGALLAKEINVPIIGIGAGAETDGQVLVYHDVIGYESERVAKFVKQYTAVSPIIEEGLASYVTDVKQRAFPEEAHTYTTNDTGWLAVYGGDKK.

Residues D43 and D82 each coordinate Mg(2+). 3-methyl-2-oxobutanoate-binding positions include 43-44 (DS), D82, and K112. E114 is a Mg(2+) binding site. E181 acts as the Proton acceptor in catalysis.

The protein belongs to the PanB family. Homodecamer; pentamer of dimers. The cofactor is Mg(2+).

It localises to the cytoplasm. It carries out the reaction 3-methyl-2-oxobutanoate + (6R)-5,10-methylene-5,6,7,8-tetrahydrofolate + H2O = 2-dehydropantoate + (6S)-5,6,7,8-tetrahydrofolate. It functions in the pathway cofactor biosynthesis; (R)-pantothenate biosynthesis; (R)-pantoate from 3-methyl-2-oxobutanoate: step 1/2. Catalyzes the reversible reaction in which hydroxymethyl group from 5,10-methylenetetrahydrofolate is transferred onto alpha-ketoisovalerate to form ketopantoate. This is 3-methyl-2-oxobutanoate hydroxymethyltransferase from Shouchella clausii (strain KSM-K16) (Alkalihalobacillus clausii).